We begin with the raw amino-acid sequence, 307 residues long: MRKIILCSPRGFCAGVIRAIQTVEVALEKWGRPIYVKHEIVHNRHVVDKLREKGAIFIEDLQEVPRNSRVIFSAHGVPPSVREEAAERGLIAIDATCGLVTKVHSAVKMYAKKGYHIILIGKRKHVEIIGIRGEAPDQITVVENIAEVEALPFSAQDPLFYVTQTTLSMDDAADIVAALKARYPRIFTLPSSSICYATQNRQGALRNILPQVDFVYVIGDSQSSNSNRLREVAERRGVTARLVNHPDEVTEEILQYSGNIGITAGASTPEDVVQACLMKLQELIPDLSIEMDLFVEEDTVFQLPKEL.

Residue C13 participates in [4Fe-4S] cluster binding. (2E)-4-hydroxy-3-methylbut-2-enyl diphosphate is bound by residues H42 and H75. 2 residues coordinate dimethylallyl diphosphate: H42 and H75. Positions 42 and 75 each coordinate isopentenyl diphosphate. C97 lines the [4Fe-4S] cluster pocket. H125 is a (2E)-4-hydroxy-3-methylbut-2-enyl diphosphate binding site. H125 is a binding site for dimethylallyl diphosphate. H125 is a binding site for isopentenyl diphosphate. The active-site Proton donor is E127. (2E)-4-hydroxy-3-methylbut-2-enyl diphosphate is bound at residue T165. C195 lines the [4Fe-4S] cluster pocket. (2E)-4-hydroxy-3-methylbut-2-enyl diphosphate contacts are provided by S223, S224, N225, and S267. Residues S223, S224, N225, and S267 each coordinate dimethylallyl diphosphate. Residues S223, S224, N225, and S267 each contribute to the isopentenyl diphosphate site.

The protein belongs to the IspH family. It depends on [4Fe-4S] cluster as a cofactor.

It carries out the reaction isopentenyl diphosphate + 2 oxidized [2Fe-2S]-[ferredoxin] + H2O = (2E)-4-hydroxy-3-methylbut-2-enyl diphosphate + 2 reduced [2Fe-2S]-[ferredoxin] + 2 H(+). The enzyme catalyses dimethylallyl diphosphate + 2 oxidized [2Fe-2S]-[ferredoxin] + H2O = (2E)-4-hydroxy-3-methylbut-2-enyl diphosphate + 2 reduced [2Fe-2S]-[ferredoxin] + 2 H(+). It functions in the pathway isoprenoid biosynthesis; dimethylallyl diphosphate biosynthesis; dimethylallyl diphosphate from (2E)-4-hydroxy-3-methylbutenyl diphosphate: step 1/1. It participates in isoprenoid biosynthesis; isopentenyl diphosphate biosynthesis via DXP pathway; isopentenyl diphosphate from 1-deoxy-D-xylulose 5-phosphate: step 6/6. Functionally, catalyzes the conversion of 1-hydroxy-2-methyl-2-(E)-butenyl 4-diphosphate (HMBPP) into a mixture of isopentenyl diphosphate (IPP) and dimethylallyl diphosphate (DMAPP). Acts in the terminal step of the DOXP/MEP pathway for isoprenoid precursor biosynthesis. The protein is 4-hydroxy-3-methylbut-2-enyl diphosphate reductase of Chlamydia trachomatis serovar A (strain ATCC VR-571B / DSM 19440 / HAR-13).